Here is a 75-residue protein sequence, read N- to C-terminus: MESTISLKVNKGKGKGSKGASSSDDKSKFDVVKEWTNWSLKKAKVVTHYGFIPLVIFVGMNSDPKPHLFQLLSPV.

Met-1 carries the N-acetylmethionine modification. The disordered stretch occupies residues 1-28; that stretch reads MESTISLKVNKGKGKGSKGASSSDDKSK. Topologically, residues 1–46 are cytoplasmic; it reads MESTISLKVNKGKGKGSKGASSSDDKSKFDVVKEWTNWSLKKAKVV. The chain crosses the membrane as a helical span at residues 47 to 64; sequence THYGFIPLVIFVGMNSDP. Topologically, residues 65 to 75 are mitochondrial intermembrane; the sequence is KPHLFQLLSPV.

This sequence belongs to the Tom7 family. In terms of assembly, forms part of the preprotein translocase complex of the outer mitochondrial membrane (TOM complex) which consists of at least 6 different proteins (TOM5, TOM6, TOM7, TOM20, TOM22/TOM9 and TOM40). As to expression, expressed in roots, flowers, young cotyledons and leaves.

It localises to the mitochondrion outer membrane. Its function is as follows. Seems to act as a modulator of the dynamics of the mitochondrial protein transport machinery. Seems to promote the dissociation of subunits of the outer membrane translocase. In Arabidopsis thaliana (Mouse-ear cress), this protein is Mitochondrial import receptor subunit TOM7-1 (TOM7-1).